Here is a 482-residue protein sequence, read N- to C-terminus: BTB/POZ domain-containing protein 6-B (482 aa).

In terms of domain architecture, BTB spans 80–150 (ADVHFVVGPP…MYSDEIELEA (71 aa)).

Interacts with cul3. Interacts (via BTB domain) with zbtb16/plzf. As to expression, in embryos, expressed in the cranial ganglia.

It is found in the cytoplasm. The protein resides in the nucleus. Adapter protein for the cul3 E3 ubiquitin-protein ligase complex. Promotes the export of zbtb16/plzf from the nucleus to the cytoplasm and targets zbtb16/plzf for ubiquitination and degradation. Up-regulates neurog1 expression and antagonizes zbtb16/plzf, to promote neurogenesis. In Danio rerio (Zebrafish), this protein is BTB/POZ domain-containing protein 6-B (btbd6b).